Reading from the N-terminus, the 554-residue chain is Hydroxylamine reductase (554 aa).

4 residues coordinate [2Fe-2S] cluster: C3, C6, C18, and C25. H252, E276, C320, C408, C436, C461, E495, and K497 together coordinate hybrid [4Fe-2O-2S] cluster. C408 is modified (cysteine persulfide).

The protein belongs to the HCP family. [2Fe-2S] cluster is required as a cofactor. Requires hybrid [4Fe-2O-2S] cluster as cofactor.

Its subcellular location is the cytoplasm. It catalyses the reaction A + NH4(+) + H2O = hydroxylamine + AH2 + H(+). In terms of biological role, catalyzes the reduction of hydroxylamine to form NH(3) and H(2)O. This chain is Hydroxylamine reductase, found in Shewanella baltica (strain OS195).